The primary structure comprises 192 residues: Potassium-transporting ATPase KdpC subunit (192 aa).

A helical membrane pass occupies residues 7 to 27 (PLIVLFVVLAALTGLAYPAVM).

Belongs to the KdpC family. The system is composed of three essential subunits: KdpA, KdpB and KdpC.

It is found in the cell inner membrane. Its function is as follows. Part of the high-affinity ATP-driven potassium transport (or Kdp) system, which catalyzes the hydrolysis of ATP coupled with the electrogenic transport of potassium into the cytoplasm. This subunit acts as a catalytic chaperone that increases the ATP-binding affinity of the ATP-hydrolyzing subunit KdpB by the formation of a transient KdpB/KdpC/ATP ternary complex. This is Potassium-transporting ATPase KdpC subunit from Paraburkholderia xenovorans (strain LB400).